Here is a 417-residue protein sequence, read N- to C-terminus: Gamma-glutamyl phosphate reductase (417 aa).

This sequence belongs to the gamma-glutamyl phosphate reductase family.

It is found in the cytoplasm. The enzyme catalyses L-glutamate 5-semialdehyde + phosphate + NADP(+) = L-glutamyl 5-phosphate + NADPH + H(+). Its pathway is amino-acid biosynthesis; L-proline biosynthesis; L-glutamate 5-semialdehyde from L-glutamate: step 2/2. Catalyzes the NADPH-dependent reduction of L-glutamate 5-phosphate into L-glutamate 5-semialdehyde and phosphate. The product spontaneously undergoes cyclization to form 1-pyrroline-5-carboxylate. The protein is Gamma-glutamyl phosphate reductase of Escherichia coli O6:H1 (strain CFT073 / ATCC 700928 / UPEC).